We begin with the raw amino-acid sequence, 360 residues long: Protein phosphatase 1 regulatory subunit 7 (360 aa).

Positions 1 to 65 (MAAERGAGQQ…DEDPEEGQEL (65 aa)) are disordered. Ala2 is subject to N-acetylalanine. Phosphoserine occurs at positions 12, 24, 27, 44, and 47. Basic and acidic residues predominate over residues 17–34 (EVDRRVESEESGDEEGKK). Residues 53 to 63 (ERGDEDPEEGQ) are compositionally biased toward acidic residues. LRR repeat units lie at residues 77–98 (DAED…EVLK), 99–120 (KVKT…EGLQ), 121–142 (SLRE…DALT), 143–164 (ELEV…DKLT), 165–186 (RLKK…SSLH), 187–208 (QLQM…DTLT), 209–230 (NLES…DALT), 231–252 (NLTV…QSLV), 253–274 (NLRE…DNNN), 275–296 (KLTM…SHLT), and 297–318 (ELQE…DELK). Ser322 is modified (phosphoserine). Residues 331-360 (NPLQRDPQYRRKIMLALPSVRQIDATFVRF) form the LRRCT domain.

It belongs to the SDS22 family. Interacts with PPP1CA, PPP1CB and PPP1CC/PPP1G. Interacts with PPP1CC isoform 2 in motile caudal epididymal spermatozoa. In terms of tissue distribution, expressed in epididymal spermatozoa including the principal piece of the flagellum and the head-neck junction.

The protein localises to the nucleus. Its function is as follows. Regulatory subunit of protein phosphatase 1. Inactivates the PPP1CC isoform 2 during epididymal sperm maturation. The chain is Protein phosphatase 1 regulatory subunit 7 (PPP1R7) from Bos taurus (Bovine).